An 853-amino-acid chain; its full sequence is DNA mismatch repair protein MutS (853 aa).

614 to 621 (GPNMGGKS) contributes to the ATP binding site.

It belongs to the DNA mismatch repair MutS family.

In terms of biological role, this protein is involved in the repair of mismatches in DNA. It is possible that it carries out the mismatch recognition step. This protein has a weak ATPase activity. The chain is DNA mismatch repair protein MutS from Escherichia coli O1:K1 / APEC.